We begin with the raw amino-acid sequence, 445 residues long: Lateral flagellar hook-associated protein 2 (445 aa).

Residues 388-423 (SGAFKSRKEALQANLDRLSDKQTTLERKYDMSYKRY) adopt a coiled-coil conformation.

Belongs to the FliD family. As to quaternary structure, homopentamer.

The protein resides in the secreted. It localises to the bacterial flagellum. Its function is as follows. Required for the morphogenesis and for the elongation of the flagellar filament by facilitating polymerization of the flagellin monomers at the tip of growing filament. Forms a capping structure, which prevents flagellin subunits (transported through the central channel of the flagellum) from leaking out without polymerization at the distal end. Essential for swarming motility. This is Lateral flagellar hook-associated protein 2 (fliDL) from Vibrio parahaemolyticus serotype O3:K6 (strain RIMD 2210633).